The sequence spans 203 residues: Monothiol glutaredoxin-7 (203 aa).

Residues 1–32 (MAIVINKRNVRVLVITNLLLIVVFFVLRNSNA) form the signal peptide. Positions 88 to 191 (AAEYNKIMEQ…DSFKKWSDGA (104 aa)) constitute a Glutaredoxin domain. Cys108 is a binding site for [2Fe-2S] cluster.

Belongs to the glutaredoxin family. Monothiol subfamily.

This Saccharomyces cerevisiae (strain ATCC 204508 / S288c) (Baker's yeast) protein is Monothiol glutaredoxin-7 (GRX7).